A 462-amino-acid polypeptide reads, in one-letter code: ATP synthase subunit beta 1 (462 aa).

Residue G152–T159 coordinates ATP.

Belongs to the ATPase alpha/beta chains family. F-type ATPases have 2 components, CF(1) - the catalytic core - and CF(0) - the membrane proton channel. CF(1) has five subunits: alpha(3), beta(3), gamma(1), delta(1), epsilon(1). CF(0) has four main subunits: a(1), b(1), b'(1) and c(9-12).

The protein localises to the cell inner membrane. The catalysed reaction is ATP + H2O + 4 H(+)(in) = ADP + phosphate + 5 H(+)(out). In terms of biological role, produces ATP from ADP in the presence of a proton gradient across the membrane. The catalytic sites are hosted primarily by the beta subunits. The protein is ATP synthase subunit beta 1 of Dinoroseobacter shibae (strain DSM 16493 / NCIMB 14021 / DFL 12).